The sequence spans 167 residues: Ribosome maturation factor RimP (167 aa).

Belongs to the RimP family.

The protein localises to the cytoplasm. Required for maturation of 30S ribosomal subunits. This chain is Ribosome maturation factor RimP, found in Streptomyces griseus subsp. griseus (strain JCM 4626 / CBS 651.72 / NBRC 13350 / KCC S-0626 / ISP 5235).